We begin with the raw amino-acid sequence, 342 residues long: Anthranilate phosphoribosyltransferase (342 aa).

5-phospho-alpha-D-ribose 1-diphosphate contacts are provided by residues G79, 82-83, T87, 89-92, 107-115, and S119; these read GD, NIST, and KHCNQRISS. An anthranilate-binding site is contributed by G79. A Mg(2+)-binding site is contributed by S91. Residue N110 coordinates anthranilate. R165 serves as a coordination point for anthranilate. Residues D223 and E224 each coordinate Mg(2+).

The protein belongs to the anthranilate phosphoribosyltransferase family. In terms of assembly, homodimer. Mg(2+) serves as cofactor.

It carries out the reaction N-(5-phospho-beta-D-ribosyl)anthranilate + diphosphate = 5-phospho-alpha-D-ribose 1-diphosphate + anthranilate. The protein operates within amino-acid biosynthesis; L-tryptophan biosynthesis; L-tryptophan from chorismate: step 2/5. Catalyzes the transfer of the phosphoribosyl group of 5-phosphorylribose-1-pyrophosphate (PRPP) to anthranilate to yield N-(5'-phosphoribosyl)-anthranilate (PRA). This chain is Anthranilate phosphoribosyltransferase, found in Buchnera aphidicola subsp. Acyrthosiphon pisum (strain Tuc7).